The sequence spans 168 residues: uncharacterized protein (168 aa).

CBS domains follow at residues 20–77 (IMKK…NEDL) and 117–168 (MTRK…EALI).

This is an uncharacterized protein from Methanocaldococcus jannaschii (strain ATCC 43067 / DSM 2661 / JAL-1 / JCM 10045 / NBRC 100440) (Methanococcus jannaschii).